The sequence spans 186 residues: Crossover junction endodeoxyribonuclease RuvC (186 aa).

Residues Asp-7, Glu-73, and Asp-145 contribute to the active site. Asp-7, Glu-73, and Asp-145 together coordinate Mg(2+).

The protein belongs to the RuvC family. Homodimer which binds Holliday junction (HJ) DNA. The HJ becomes 2-fold symmetrical on binding to RuvC with unstacked arms; it has a different conformation from HJ DNA in complex with RuvA. In the full resolvosome a probable DNA-RuvA(4)-RuvB(12)-RuvC(2) complex forms which resolves the HJ. The cofactor is Mg(2+).

Its subcellular location is the cytoplasm. It carries out the reaction Endonucleolytic cleavage at a junction such as a reciprocal single-stranded crossover between two homologous DNA duplexes (Holliday junction).. Functionally, the RuvA-RuvB-RuvC complex processes Holliday junction (HJ) DNA during genetic recombination and DNA repair. Endonuclease that resolves HJ intermediates. Cleaves cruciform DNA by making single-stranded nicks across the HJ at symmetrical positions within the homologous arms, yielding a 5'-phosphate and a 3'-hydroxyl group; requires a central core of homology in the junction. The consensus cleavage sequence is 5'-(A/T)TT(C/G)-3'. Cleavage occurs on the 3'-side of the TT dinucleotide at the point of strand exchange. HJ branch migration catalyzed by RuvA-RuvB allows RuvC to scan DNA until it finds its consensus sequence, where it cleaves and resolves the cruciform DNA. The sequence is that of Crossover junction endodeoxyribonuclease RuvC from Acidovorax sp. (strain JS42).